A 413-amino-acid chain; its full sequence is Peptide chain release factor 1, mitochondrial (413 aa).

Residues 1 to 40 constitute a mitochondrion transit peptide; the sequence is MRVLIRPNFLSNLIRYCSRGTHSHDRSLRSVLSSNMIRLY. Gln287 bears the N5-methylglutamine mark.

It belongs to the prokaryotic/mitochondrial release factor family. In terms of processing, methylation increases the termination efficiency of RF1. Mostly expressed in seedlings, stems and adult plants, and, to a lower extent, in siliques. Barely detected in etiolated seedlings and roots.

It is found in the mitochondrion. In terms of biological role, peptide chain release factor 1 directs the termination of translation in response to the peptide chain termination codons UAG and UAA in mitochondria. This is Peptide chain release factor 1, mitochondrial from Arabidopsis thaliana (Mouse-ear cress).